We begin with the raw amino-acid sequence, 287 residues long: MKRLSALLLTCLLSAVSSLSALAADADPDVLKVALLPDENASELIKRNQPLKDYLEEHLDKKVQLIVTTDYSSMIEAMRFGRIDLAYFGPLSYVMAKSKSDIEPFAAMVIDGKPTYRSVIIANVASGVNEYADLKGKRMAYGDRASTSSHLIPKTVLLETADLTGGQDYEQHFVGTHDAVAVNVANGNADAGGLSEVIFNHAAERGLIDPSKVKVLGYSGEYPQYPWAMRSNLSPELKTKVRDVFVGIDDPEVLRNFKAEAFAPITDADYDVIRNMGSLLGLDFATM.

A signal peptide spans 1 to 23 (MKRLSALLLTCLLSAVSSLSALA).

The protein belongs to the phosphate/phosphite/phosphonate binding protein family.

In terms of biological role, probably forms part of a binding-protein-dependent phosphite transporter. Required for oxidation of phosphite to phosphate. The sequence is that of Probable phosphite transport system-binding protein PtxB (ptxB) from Stutzerimonas stutzeri (Pseudomonas stutzeri).